Here is a 146-residue protein sequence, read N- to C-terminus: Hemoglobin subunit beta (146 aa).

A Globin domain is found at 2 to 146 (HWTADEKQLI…VAHALALGYH (145 aa)). Residues H63 and H92 each coordinate heme b.

Belongs to the globin family. Heterotetramer of two alpha chains and two beta chains. As to expression, red blood cells.

Functionally, involved in oxygen transport from the lung to the various peripheral tissues. This chain is Hemoglobin subunit beta (HBB), found in Chrysemys picta bellii (Western painted turtle).